We begin with the raw amino-acid sequence, 508 residues long: Photosystem II CP47 reaction center protein (508 aa).

Helical transmembrane passes span 21 to 36 (SVHI…WAGS), 101 to 115 (IVFS…IWHW), 140 to 156 (GIHL…FGAF), 203 to 218 (IAAG…FHLS), 237 to 252 (VLSS…AFVV), and 457 to 472 (SFAL…HGAR).

Belongs to the PsbB/PsbC family. PsbB subfamily. PSII is composed of 1 copy each of membrane proteins PsbA, PsbB, PsbC, PsbD, PsbE, PsbF, PsbH, PsbI, PsbJ, PsbK, PsbL, PsbM, PsbT, PsbX, PsbY, PsbZ, Psb30/Ycf12, at least 3 peripheral proteins of the oxygen-evolving complex and a large number of cofactors. It forms dimeric complexes. Requires Binds multiple chlorophylls. PSII binds additional chlorophylls, carotenoids and specific lipids. as cofactor.

The protein resides in the plastid. The protein localises to the chloroplast thylakoid membrane. In terms of biological role, one of the components of the core complex of photosystem II (PSII). It binds chlorophyll and helps catalyze the primary light-induced photochemical processes of PSII. PSII is a light-driven water:plastoquinone oxidoreductase, using light energy to abstract electrons from H(2)O, generating O(2) and a proton gradient subsequently used for ATP formation. This chain is Photosystem II CP47 reaction center protein, found in Dioscorea elephantipes (Elephant's foot yam).